A 234-amino-acid chain; its full sequence is GTP-binding protein YPT52 (234 aa).

GTP-binding positions include 10-17, 66-70, and 111-114; these read GDSSVGKS, DTAGQ, and NKVG. Disordered regions lie at residues 131–151 and 206–234; these read QETP…EEQK and NRQI…SCCS. Residues 132–142 show a composition bias toward polar residues; the sequence is ETPSTETSPDS. Residues serine 139 and serine 142 each carry the phosphoserine modification. Residue lysine 151 forms a Glycyl lysine isopeptide (Lys-Gly) (interchain with G-Cter in ubiquitin) linkage. The segment covering 217–234 has biased composition (polar residues); sequence VDINLQRPSTNDPTSCCS. S-geranylgeranyl cysteine attachment occurs at residues cysteine 232 and cysteine 233.

This sequence belongs to the small GTPase superfamily. Rab family. As to quaternary structure, interacts with ROY1, YIF1, YIP3, YIP4 and YIP5.

The protein resides in the cell membrane. Its subcellular location is the endoplasmic reticulum. Required for transport in the endocytic pathway and for correct sorting of the vacuolar hydrolases suggesting a possible intersection of the endocytic with the vacuolar sorting pathway. May be involved in recruiting the MON1-CCZ1 complex to membranes enriched in phosphatidylinositol 3-phosphate (PtdIns[3]P) or other charged lipids, leading to recruitment of YPT7. The protein is GTP-binding protein YPT52 (YPT52) of Saccharomyces cerevisiae (strain ATCC 204508 / S288c) (Baker's yeast).